A 531-amino-acid chain; its full sequence is Zinc finger protein 837 (531 aa).

A disordered region spans residues 1–101 (MEAPAQKAGQ…CGPTSSQNPE (101 aa)). The span at 24 to 50 (AREKRPEEPRPLEEDRAGSRPTQKGDL) shows a compositional bias: basic and acidic residues. 8 consecutive C2H2-type zinc fingers follow at residues 271 to 293 (YACD…QRIH), 299 to 321 (YECA…QKTH), 363 to 385 (YECA…RRVH), 391 to 413 (YACP…QRTH), 419 to 441 (YACP…QRAH), 447 to 469 (YGCS…ERLH), 475 to 497 (YICR…LRTH), and 503 to 525 (YACG…RKRH).

It belongs to the krueppel C2H2-type zinc-finger protein family.

Its subcellular location is the nucleus. May be involved in transcriptional regulation. This chain is Zinc finger protein 837 (ZNF837), found in Homo sapiens (Human).